We begin with the raw amino-acid sequence, 341 residues long: GTP 3',8-cyclase (341 aa).

Positions 11–231 (QKSRPLRDLR…RIINEDMPIE (221 aa)) constitute a Radical SAM core domain. Arg20 lines the GTP pocket. Residues Cys27 and Cys31 each coordinate [4Fe-4S] cluster. Tyr33 is an S-adenosyl-L-methionine binding site. Position 34 (Cys34) interacts with [4Fe-4S] cluster. Position 75 (Arg75) interacts with GTP. Gly79 is a binding site for S-adenosyl-L-methionine. Thr106 provides a ligand contact to GTP. Residue Ser130 participates in S-adenosyl-L-methionine binding. Lys167 lines the GTP pocket. Met201 contacts S-adenosyl-L-methionine. The [4Fe-4S] cluster site is built by Cys265 and Cys268. 270–272 (RAR) contacts GTP. Cys282 serves as a coordination point for [4Fe-4S] cluster.

The protein belongs to the radical SAM superfamily. MoaA family. As to quaternary structure, monomer and homodimer. Requires [4Fe-4S] cluster as cofactor.

It catalyses the reaction GTP + AH2 + S-adenosyl-L-methionine = (8S)-3',8-cyclo-7,8-dihydroguanosine 5'-triphosphate + 5'-deoxyadenosine + L-methionine + A + H(+). Its pathway is cofactor biosynthesis; molybdopterin biosynthesis. Catalyzes the cyclization of GTP to (8S)-3',8-cyclo-7,8-dihydroguanosine 5'-triphosphate. This Bacillus licheniformis (strain ATCC 14580 / DSM 13 / JCM 2505 / CCUG 7422 / NBRC 12200 / NCIMB 9375 / NCTC 10341 / NRRL NRS-1264 / Gibson 46) protein is GTP 3',8-cyclase.